We begin with the raw amino-acid sequence, 504 residues long: MQMSKSFLLITVGLASTSLQAQTLTRDNGAPVGDNQNSITAGENGSVLLQDVHLIQKLQRFARERIPERVVHARGTGAHGEFVASGDFSDLTVSAPFTEKGKVTPVFVRFSTVIHSKGSPETLRDPRGFATKFYTEQGNWDLVGNNLPVFFIRDSIKFPDMVHSLKPSPVTNVQDPNRFFDFFSHEPSATHMLTWVYSNLGTPASYRTMDGFGVHAYKWINQQGDVNYVKFQWKSQQGIKSLRPNKVTEMQGKDFNHLTNDLYAAIGRGNYPKWDLYVKVLSPEALSKLDYNGLDATKVWLNVPDRKVGTMTLNRLPENFFLETEQSAFAPSNLIPGIEPSEDRLLQGRLFAYADTQLYRLGANLFQLPVNRPLTSVNNHNQNGLSNNAQLSNGDVNYEPSRKLNLAEDNQFKAVETKLVGTVQQKAISKPRDFYQAGVLYRSMNEQDRSDLIANLAGDLNKVIDKDIKATMVSYFYRADKEYGSRLAEATDTNLSQVKNKAMM.

The N-terminal stretch at 1–21 (MQMSKSFLLITVGLASTSLQA) is a signal peptide. Catalysis depends on residues H72 and N145. Position 353 (Y353) interacts with heme.

Belongs to the catalase family. It depends on heme as a cofactor.

It is found in the periplasm. The enzyme catalyses 2 H2O2 = O2 + 2 H2O. In terms of biological role, decomposes hydrogen peroxide into water and oxygen; serves to protect cells from the toxic effects of hydrogen peroxide. This is Catalase from Vibrio parahaemolyticus serotype O3:K6 (strain RIMD 2210633).